Here is a 148-residue protein sequence, read N- to C-terminus: Helix-loop-helix protein 14 (148 aa).

Disordered stretches follow at residues 1 to 21 (MAKK…HQVN), 63 to 83 (DPQQ…NSNN), and 112 to 132 (GDVS…SYSP). The interval 4–17 (KNQVARNERERKRV) is basic motif. The 53-residue stretch at 4–56 (KNQVARNERERKRVHQVNHGFDVLRNRLQPKNHTKKWSKADTLREAVKYIQQL) folds into the bHLH domain. A helix-loop-helix motif region spans residues 18 to 56 (HQVNHGFDVLRNRLQPKNHTKKWSKADTLREAVKYIQQL). Residues 63-78 (DPQQPSVSSSTPDYTM) show a composition bias toward polar residues. Positions 120-132 (SPTSSVSSSSYSP) are enriched in low complexity.

It is found in the nucleus. Its function is as follows. Probable transcription factor, involved in determining neuroblast cell fate, morphogenesis and aspects of terminal differentiation in both left/right symmetric and asymmetric neuronal lineages. This is Helix-loop-helix protein 14 from Caenorhabditis elegans.